The primary structure comprises 124 residues: V-type proton ATPase subunit F 1 (124 aa).

This sequence belongs to the V-ATPase F subunit family. As to quaternary structure, V-ATPase is a heteromultimeric enzyme made up of two complexes: the ATP-hydrolytic V1 complex and the proton translocation V0 complex. The V1 complex consists of three catalytic AB heterodimers that form a heterohexamer, three peripheral stalks each consisting of EG heterodimers, one central rotor including subunits D and F, and the regulatory subunits C and H. The proton translocation complex V0 consists of the proton transport subunit a, a ring of proteolipid subunits c9c'', rotary subunit d, subunits e and f, and the accessory subunits VhaAC45 and ATP6AP2.

Subunit of the V1 complex of vacuolar(H+)-ATPase (V-ATPase), a multisubunit enzyme composed of a peripheral complex (V1) that hydrolyzes ATP and a membrane integral complex (V0) that translocates protons. V-ATPase is responsible for acidifying and maintaining the pH of intracellular compartments and in some cell types, is targeted to the plasma membrane, where it is responsible for acidifying the extracellular environment. The polypeptide is V-type proton ATPase subunit F 1 (Vha14) (Drosophila pseudoobscura pseudoobscura (Fruit fly)).